Reading from the N-terminus, the 293-residue chain is 4-hydroxy-tetrahydrodipicolinate synthase (293 aa).

Residue Thr47 participates in pyruvate binding. The active-site Proton donor/acceptor is the Tyr136. The active-site Schiff-base intermediate with substrate is Lys164. Ile206 lines the pyruvate pocket.

The protein belongs to the DapA family. In terms of assembly, homotetramer; dimer of dimers.

It is found in the cytoplasm. The catalysed reaction is L-aspartate 4-semialdehyde + pyruvate = (2S,4S)-4-hydroxy-2,3,4,5-tetrahydrodipicolinate + H2O + H(+). It participates in amino-acid biosynthesis; L-lysine biosynthesis via DAP pathway; (S)-tetrahydrodipicolinate from L-aspartate: step 3/4. Catalyzes the condensation of (S)-aspartate-beta-semialdehyde [(S)-ASA] and pyruvate to 4-hydroxy-tetrahydrodipicolinate (HTPA). This Listeria monocytogenes serovar 1/2a (strain ATCC BAA-679 / EGD-e) protein is 4-hydroxy-tetrahydrodipicolinate synthase.